A 79-amino-acid polypeptide reads, in one-letter code: CDC42 small effector protein 1 (79 aa).

2 S-palmitoyl cysteine lipidation sites follow: C10 and C11. Residues 30–43 (IGEPMNFVHLTHIG) form the CRIB domain. The interval 48 to 79 (GAGDGLAMTGAVQEQMRSKGNRDRPWSNSRGL) is disordered. A compositionally biased stretch (basic and acidic residues) spans 63-72 (MRSKGNRDRP).

The protein belongs to the CDC42SE/SPEC family. In terms of assembly, interacts with CDC42 (in GTP-bound form). Interacts weakly with RAC1 and not at all with RHOA.

Its subcellular location is the cytoplasm. It is found in the cytoskeleton. It localises to the cell membrane. Functionally, probably involved in the organization of the actin cytoskeleton by acting downstream of CDC42, inducing actin filament assembly. Alters CDC42-induced cell shape changes. In activated T-cells, may play a role in CDC42-mediated F-actin accumulation at the immunological synapse. May play a role in early contractile events in phagocytosis in macrophages. The polypeptide is CDC42 small effector protein 1 (CDC42SE1) (Pongo abelii (Sumatran orangutan)).